Consider the following 381-residue polypeptide: NF-kappa-B inhibitor-like protein 1 (381 aa).

The segment at 1–34 is disordered; that stretch reads MSNPSPQVPEEEASTSVCRPKSSMASTSRRQRRE. 2 ANK repeats span residues 64–93 and 97–133; these read GQPP…DPAH and HGDT…IKNK. Disordered stretches follow at residues 131–167, 186–242, and 256–294; these read KNKD…EWRQ, GDAS…QEEE, and ELRE…RGSL. Phosphoserine is present on Ser150. Positions 150-159 are enriched in acidic residues; the sequence is SAEEEEEDDA. Over residues 256–287 the composition is skewed to basic and acidic residues; the sequence is ELRESRARRAQEALGDREPKPARAGPRAEHPR.

As to quaternary structure, interacts with CACTIN (via N-terminal domain); the interaction occurs in a pro-inflammatory-independent manner.

It is found in the nucleus. Functionally, involved in the regulation of innate immune response. Acts as negative regulator of Toll-like receptor and interferon-regulatory factor (IRF) signaling pathways. Contributes to the negative regulation of transcriptional activation of NF-kappa-B target genes in response to endogenous pro-inflammatory stimuli. The protein is NF-kappa-B inhibitor-like protein 1 (NFKBIL1) of Macaca mulatta (Rhesus macaque).